Here is a 157-residue protein sequence, read N- to C-terminus: MPVDPEKLAKLQKSTAKKVGGSRVKAKKGVKTEQDDTKLIETLGKLKATKIEGVEEANFFKDDGKVLHFNRVGVQGAPAANTFAFTGYPQEKNITQLIPQILPQLGAENLEILRQLAEQIQAGKNPKDFGAAGEAGATEEANEDIPDLVDQKFDDVE.

The disordered stretch occupies residues 1–31 (MPVDPEKLAKLQKSTAKKVGGSRVKAKKGVK). The region spanning 33–98 (EQDDTKLIET…PQEKNITQLI (66 aa)) is the NAC-A/B domain. Residues 125 to 157 (NPKDFGAAGEAGATEEANEDIPDLVDQKFDDVE) are disordered. The segment covering 130–139 (GAAGEAGATE) has biased composition (low complexity).

It belongs to the NAC-beta family. As to quaternary structure, part of the nascent polypeptide-associated complex (NAC), consisting of EGD2 and EGD1. NAC associates with ribosomes via EGD1.

The protein resides in the cytoplasm. It is found in the nucleus. In terms of biological role, component of the nascent polypeptide-associated complex (NAC), a dynamic component of the ribosomal exit tunnel, protecting the emerging polypeptides from interaction with other cytoplasmic proteins to ensure appropriate nascent protein targeting. The NAC complex also promotes mitochondrial protein import by enhancing productive ribosome interactions with the outer mitochondrial membrane and blocks the inappropriate interaction of ribosomes translating non-secretory nascent polypeptides with translocation sites in the membrane of the endoplasmic reticulum. EGD1 may act as a transcription factor that exert a negative effect on the expression of several genes that are transcribed by RNA polymerase II. The protein is Nascent polypeptide-associated complex subunit beta (EGD1) of Lodderomyces elongisporus (strain ATCC 11503 / CBS 2605 / JCM 1781 / NBRC 1676 / NRRL YB-4239) (Yeast).